The following is a 246-amino-acid chain: Nodulation protein G (246 aa).

8–32 (VTGAMGGLGTAICQALAKDGCIVAA) contacts NAD(+). Ser140 contributes to the substrate binding site. Tyr153 acts as the Proton acceptor in catalysis.

The protein belongs to the short-chain dehydrogenases/reductases (SDR) family.

Functionally, proposed to modify Nod factor fatty acyl chain. The protein is Nodulation protein G (nodG) of Azospirillum brasilense.